Here is a 456-residue protein sequence, read N- to C-terminus: MIINSNIKITLEERSNKLEQSHIEIGLLIGQESEISEQQTFVLGLFPTPLNISNTDDDNNNKPINIDSISSIDKEWILEYCHQVNIMLYGGIDIVGIYMIIPDSDTLNEKNNESFIMKLLKSIHTIINSKSLQFISYSKKTGLINGKATNSTQLYRLKSTEIKVINNLENEFLSLHCILPIDIKLKSKNGMISFENLKKDIIEIFENQLFKESTLLIENEFVSGNEIISQQFKSKSKLNIDLLINQLDSISTSSLEFNFNNNNNTHCIAYIHQLEQIKTAFKFIKKDIIKSVESRFDLLFNEISSNNNNNDNDQDNIKLSKESPILELPRRVNIQWLSNKISICDYLSSNGTIDDCYKIINDLLQITSPKINSIESSKNNNNNNNNNNNNNNNNNNNNSKLSNKKENNEIKENKDTQSNLTKSTSQQQTKQTNNSYLIIIISVLVLMVAFYFKFFV.

A compositionally biased stretch (low complexity) spans 374 to 401 (IESSKNNNNNNNNNNNNNNNNNNNNSKL). Residues 374 to 403 (IESSKNNNNNNNNNNNNNNNNNNNNSKLSN) form a disordered region. Residues 436–456 (YLIIIISVLVLMVAFYFKFFV) traverse the membrane as a helical segment.

Belongs to the ODR-4 family.

Its subcellular location is the membrane. Functionally, may play a role in the trafficking of a subset of G-protein coupled receptors. This is Protein odr-4 homolog from Dictyostelium discoideum (Social amoeba).